Here is a 593-residue protein sequence, read N- to C-terminus: Putative auxin response factor 15 (593 aa).

Residues phenylalanine 126–arginine 228 constitute a DNA-binding region (TF-B3). Residues arginine 511–arginine 592 form the PB1 domain.

It belongs to the ARF family. As to quaternary structure, homodimers and heterodimers.

Its subcellular location is the nucleus. Functionally, auxin response factors (ARFs) are transcriptional factors that bind specifically to the DNA sequence 5'-TGTCTC-3' found in the auxin-responsive promoter elements (AuxREs). Could act as transcriptional activator or repressor. Formation of heterodimers with Aux/IAA proteins may alter their ability to modulate early auxin response genes expression. This Arabidopsis thaliana (Mouse-ear cress) protein is Putative auxin response factor 15 (ARF15).